We begin with the raw amino-acid sequence, 184 residues long: Photosystem I assembly protein Ycf4 (184 aa).

2 consecutive transmembrane segments (helical) span residues 19–39 (ISNF…VLVG) and 57–77 (ILFF…LFIS).

The protein belongs to the Ycf4 family.

It is found in the plastid. Its subcellular location is the chloroplast thylakoid membrane. Functionally, seems to be required for the assembly of the photosystem I complex. The protein is Photosystem I assembly protein Ycf4 of Eucalyptus globulus subsp. globulus (Tasmanian blue gum).